The primary structure comprises 321 residues: 2,3,4,5-tetrahydropyridine-2,6-dicarboxylate N-succinyltransferase (321 aa).

Aspartate 166 and glutamate 183 together coordinate Mg(2+). The active-site Acyl-anhydride intermediate is the glutamate 199. Succinyl-CoA contacts are provided by residues arginine 201, glycine 216, serine 219, alanine 242, 257–258, glycine 265, lysine 281, and 294–297; these read EA and RRNS.

It belongs to the type 2 tetrahydrodipicolinate N-succinyltransferase family. Homotrimer.

The protein resides in the cytoplasm. It catalyses the reaction (S)-2,3,4,5-tetrahydrodipicolinate + succinyl-CoA + H2O = (S)-2-succinylamino-6-oxoheptanedioate + CoA. The protein operates within amino-acid biosynthesis; L-lysine biosynthesis via DAP pathway; LL-2,6-diaminopimelate from (S)-tetrahydrodipicolinate (succinylase route): step 1/3. Catalyzes the conversion of the cyclic tetrahydrodipicolinate (THDP) into the acyclic N-succinyl-L-2-amino-6-oxopimelate using succinyl-CoA. The protein is 2,3,4,5-tetrahydropyridine-2,6-dicarboxylate N-succinyltransferase of Micrococcus luteus (strain ATCC 4698 / DSM 20030 / JCM 1464 / CCM 169 / CCUG 5858 / IAM 1056 / NBRC 3333 / NCIMB 9278 / NCTC 2665 / VKM Ac-2230) (Micrococcus lysodeikticus).